A 309-amino-acid polypeptide reads, in one-letter code: Ribosomal RNA small subunit methyltransferase H (309 aa).

Residues 33-35 (GGH), aspartate 53, phenylalanine 79, aspartate 100, and glutamine 107 each bind S-adenosyl-L-methionine.

Belongs to the methyltransferase superfamily. RsmH family.

The protein resides in the cytoplasm. It catalyses the reaction cytidine(1402) in 16S rRNA + S-adenosyl-L-methionine = N(4)-methylcytidine(1402) in 16S rRNA + S-adenosyl-L-homocysteine + H(+). In terms of biological role, specifically methylates the N4 position of cytidine in position 1402 (C1402) of 16S rRNA. This chain is Ribosomal RNA small subunit methyltransferase H, found in Clostridium botulinum (strain Okra / Type B1).